A 395-amino-acid polypeptide reads, in one-letter code: S-adenosylmethionine synthase (395 aa).

Histidine 12 provides a ligand contact to ATP. Residue aspartate 14 coordinates Mg(2+). Glutamate 40 provides a ligand contact to K(+). L-methionine is bound by residues glutamate 53 and glutamine 96. The tract at residues 96–106 (QSKEIADAVNF) is flexible loop. Residues 174–176 (DGK), 242–243 (RF), aspartate 251, 257–258 (RK), alanine 274, and lysine 278 each bind ATP. Aspartate 251 is a binding site for L-methionine. Residue lysine 282 participates in L-methionine binding.

This sequence belongs to the AdoMet synthase family. Homotetramer; dimer of dimers. Mg(2+) serves as cofactor. The cofactor is K(+).

Its subcellular location is the cytoplasm. It carries out the reaction L-methionine + ATP + H2O = S-adenosyl-L-methionine + phosphate + diphosphate. The protein operates within amino-acid biosynthesis; S-adenosyl-L-methionine biosynthesis; S-adenosyl-L-methionine from L-methionine: step 1/1. In terms of biological role, catalyzes the formation of S-adenosylmethionine (AdoMet) from methionine and ATP. The overall synthetic reaction is composed of two sequential steps, AdoMet formation and the subsequent tripolyphosphate hydrolysis which occurs prior to release of AdoMet from the enzyme. The chain is S-adenosylmethionine synthase from Tropheryma whipplei (strain Twist) (Whipple's bacillus).